The primary structure comprises 407 residues: Protein NIS1 (407 aa).

Residues 40 to 61 (TSNSNSNSNSNSNTNSNTNSNS) show a composition bias toward low complexity. Disordered regions lie at residues 40-64 (TSNSNSNSNSNSNTNSNTNSNSDTK) and 251-315 (RSIR…KLNT). Serine 260 and serine 264 each carry phosphoserine. Positions 266–276 (PTTTPATATKT) are enriched in low complexity. Polar residues predominate over residues 277 to 302 (IKQNSTTPTTRSVYNKNVGRSNTSPS). Phosphoserine occurs at positions 300 and 302. A compositionally biased stretch (basic residues) spans 306–315 (HPKRRGKLNT). Positions 391–398 (IIIPDSQD) match the SUMO-binding motif.

Interacts with CBF2, GIS1, NAP1, PRM8, REI1, SHS1 and SMT3.

Its subcellular location is the bud neck. The protein localises to the cytoplasm. It is found in the cell cortex. Its function is as follows. May be involved in a mitotic signaling network. Binds sumoylated proteins and may stabilize SUMO chains. This chain is Protein NIS1 (NIS1), found in Saccharomyces cerevisiae (strain YJM789) (Baker's yeast).